The following is a 68-amino-acid chain: Alpha-conotoxin Lp1.1 (68 aa).

An N-terminal signal peptide occupies residues Met-1–Thr-21. Positions Phe-22–Arg-48 are excised as a propeptide. Disulfide bonds link Cys-50-Cys-56 and Cys-51-Cys-64. The segment at Ala-52–Ala-54 is lacks the Ser-Xaa-Pro motif that is crucial for potent interaction with nAChR. Gly-65 carries the glycine amide modification. The propeptide occupies Gly-66–Arg-68.

It belongs to the conotoxin A superfamily. In terms of tissue distribution, expressed by the venom duct.

The protein resides in the secreted. In terms of biological role, alpha-conotoxins act on postsynaptic membranes, they bind to the nicotinic acetylcholine receptors (nAChR) and thus inhibit them. Synthetic peptide inhibits alpha-6/alpha-3/beta-2 and alpha-3/beta-2 nicotinic acetylcholine receptors and causes uncoordinated movement when intramuscularly injected into goldfish. Has a distinct nAChR binding mode from other alpha-conotoxins, due to a different three residue motif (Ala-Xaa-Ala instead of the conserved Ser-Xaa-Pro motif). The polypeptide is Alpha-conotoxin Lp1.1 (Conus leopardus (Leopard cone)).